The chain runs to 106 residues: Pyrimidine/purine nucleoside phosphorylase (106 aa).

This sequence belongs to the nucleoside phosphorylase PpnP family.

It carries out the reaction a purine D-ribonucleoside + phosphate = a purine nucleobase + alpha-D-ribose 1-phosphate. It catalyses the reaction adenosine + phosphate = alpha-D-ribose 1-phosphate + adenine. The enzyme catalyses cytidine + phosphate = cytosine + alpha-D-ribose 1-phosphate. The catalysed reaction is guanosine + phosphate = alpha-D-ribose 1-phosphate + guanine. It carries out the reaction inosine + phosphate = alpha-D-ribose 1-phosphate + hypoxanthine. It catalyses the reaction thymidine + phosphate = 2-deoxy-alpha-D-ribose 1-phosphate + thymine. The enzyme catalyses uridine + phosphate = alpha-D-ribose 1-phosphate + uracil. The catalysed reaction is xanthosine + phosphate = alpha-D-ribose 1-phosphate + xanthine. Its function is as follows. Catalyzes the phosphorolysis of diverse nucleosides, yielding D-ribose 1-phosphate and the respective free bases. Can use uridine, adenosine, guanosine, cytidine, thymidine, inosine and xanthosine as substrates. Also catalyzes the reverse reactions. The sequence is that of Pyrimidine/purine nucleoside phosphorylase from Burkholderia ambifaria (strain ATCC BAA-244 / DSM 16087 / CCUG 44356 / LMG 19182 / AMMD) (Burkholderia cepacia (strain AMMD)).